A 175-amino-acid chain; its full sequence is Small ribosomal subunit protein uS5 (175 aa).

Positions tryptophan 19 to valine 82 constitute an S5 DRBM domain.

It belongs to the universal ribosomal protein uS5 family. As to quaternary structure, part of the 30S ribosomal subunit. Contacts proteins S4 and S8.

Its function is as follows. With S4 and S12 plays an important role in translational accuracy. Located at the back of the 30S subunit body where it stabilizes the conformation of the head with respect to the body. This is Small ribosomal subunit protein uS5 from Salinibacter ruber (strain DSM 13855 / M31).